The following is a 71-amino-acid chain: MGSFSMWHWLIVLAIVLLLFGRGKIPELMGDVAKGIKSFKKGMSDDDTAPDGTPKPADQSKTVDHRADDHK.

A helical transmembrane segment spans residues 1-21 (MGSFSMWHWLIVLAIVLLLFG). Positions 40–71 (KKGMSDDDTAPDGTPKPADQSKTVDHRADDHK) are disordered. A compositionally biased stretch (basic and acidic residues) spans 61–71 (KTVDHRADDHK).

This sequence belongs to the TatA/E family. The Tat system comprises two distinct complexes: a TatABC complex, containing multiple copies of TatA, TatB and TatC subunits, and a separate TatA complex, containing only TatA subunits. Substrates initially bind to the TatABC complex, which probably triggers association of the separate TatA complex to form the active translocon.

Its subcellular location is the cell inner membrane. Its function is as follows. Part of the twin-arginine translocation (Tat) system that transports large folded proteins containing a characteristic twin-arginine motif in their signal peptide across membranes. TatA could form the protein-conducting channel of the Tat system. The polypeptide is Sec-independent protein translocase protein TatA (Allorhizobium ampelinum (strain ATCC BAA-846 / DSM 112012 / S4) (Agrobacterium vitis (strain S4))).